Reading from the N-terminus, the 285-residue chain is Putative sugar uptake protein lin0444 (285 aa).

9 helical membrane-spanning segments follow: residues 2 to 21 (SIYLIALLPVLGWGFMPIIA), 31 to 50 (QLLGTSISALLFAFILFWIL), 55 to 77 (TVLSFIVSFVSGIFWSFGQLLQF), 111 to 133 (WQTVTAVIIGVVAVILILIGVVM), 146 to 168 (SVSFHVYGIVILSSFFLTLYVVT), 172 to 194 (FDVTGFSIILPQAIGMLTCAIGI), 207 to 229 (VTFNLMTGLSWSIANLGMFLATA), 233 to 255 (VATSFSISQACVIVATIGGILIF), and 262 to 284 (LEWTFILSGILLIMVGVVFLSLL).

The protein belongs to the GRP transporter (TC 2.A.7.5) family.

The protein resides in the cell membrane. The protein is Putative sugar uptake protein lin0444 of Listeria innocua serovar 6a (strain ATCC BAA-680 / CLIP 11262).